The following is a 515-amino-acid chain: 2,3-bisphosphoglycerate-independent phosphoglycerate mutase (515 aa).

Mn(2+) is bound by residues aspartate 14 and serine 64. Catalysis depends on serine 64, which acts as the Phosphoserine intermediate. Substrate is bound by residues histidine 125, 155–156, arginine 187, arginine 193, 263–266, and lysine 337; these read RD and RADR. 5 residues coordinate Mn(2+): aspartate 404, histidine 408, aspartate 445, histidine 446, and histidine 464.

It belongs to the BPG-independent phosphoglycerate mutase family. In terms of assembly, monomer. Mn(2+) is required as a cofactor.

It carries out the reaction (2R)-2-phosphoglycerate = (2R)-3-phosphoglycerate. It participates in carbohydrate degradation; glycolysis; pyruvate from D-glyceraldehyde 3-phosphate: step 3/5. In terms of biological role, catalyzes the interconversion of 2-phosphoglycerate and 3-phosphoglycerate. The sequence is that of 2,3-bisphosphoglycerate-independent phosphoglycerate mutase from Pseudomonas aeruginosa (strain ATCC 15692 / DSM 22644 / CIP 104116 / JCM 14847 / LMG 12228 / 1C / PRS 101 / PAO1).